The sequence spans 538 residues: Putative outer membrane porin BglH (538 aa).

The first 25 residues, 1–25 (MFRRNIITSAILLMAPLAFSAQSLA), serve as a signal peptide directing secretion.

Belongs to the porin LamB (TC 1.B.3) family.

Its subcellular location is the cell outer membrane. In terms of biological role, may be a sugar porin with a broad carbohydrate specificity. This chain is Putative outer membrane porin BglH (bglH), found in Escherichia coli (strain UTI89 / UPEC).